We begin with the raw amino-acid sequence, 498 residues long: Glycerol kinase (498 aa).

T12 is a binding site for ADP. T12, T13, and S14 together coordinate ATP. T12 is a sn-glycerol 3-phosphate binding site. R16 is a binding site for ADP. Sn-glycerol 3-phosphate is bound by residues R82, E83, Y134, and D244. Glycerol-binding residues include R82, E83, Y134, D244, and Q245. Positions 266 and 310 each coordinate ADP. Residues T266, G310, Q314, and G411 each coordinate ATP. ADP is bound by residues G411 and N415.

This sequence belongs to the FGGY kinase family.

The catalysed reaction is glycerol + ATP = sn-glycerol 3-phosphate + ADP + H(+). The protein operates within polyol metabolism; glycerol degradation via glycerol kinase pathway; sn-glycerol 3-phosphate from glycerol: step 1/1. Inhibited by fructose 1,6-bisphosphate (FBP). Key enzyme in the regulation of glycerol uptake and metabolism. Catalyzes the phosphorylation of glycerol to yield sn-glycerol 3-phosphate. The chain is Glycerol kinase from Azorhizobium caulinodans (strain ATCC 43989 / DSM 5975 / JCM 20966 / LMG 6465 / NBRC 14845 / NCIMB 13405 / ORS 571).